The chain runs to 435 residues: Serine--tRNA ligase (435 aa).

242–244 (TAE) provides a ligand contact to L-serine. 273-275 (RSE) serves as a coordination point for ATP. Glu296 lines the L-serine pocket. Residue 360–363 (EISS) participates in ATP binding. Ser396 is a binding site for L-serine.

The protein belongs to the class-II aminoacyl-tRNA synthetase family. Type-1 seryl-tRNA synthetase subfamily. As to quaternary structure, homodimer. The tRNA molecule binds across the dimer.

The protein resides in the cytoplasm. The enzyme catalyses tRNA(Ser) + L-serine + ATP = L-seryl-tRNA(Ser) + AMP + diphosphate + H(+). It carries out the reaction tRNA(Sec) + L-serine + ATP = L-seryl-tRNA(Sec) + AMP + diphosphate + H(+). It participates in aminoacyl-tRNA biosynthesis; selenocysteinyl-tRNA(Sec) biosynthesis; L-seryl-tRNA(Sec) from L-serine and tRNA(Sec): step 1/1. Functionally, catalyzes the attachment of serine to tRNA(Ser). Is also able to aminoacylate tRNA(Sec) with serine, to form the misacylated tRNA L-seryl-tRNA(Sec), which will be further converted into selenocysteinyl-tRNA(Sec). The sequence is that of Serine--tRNA ligase from Vibrio vulnificus (strain CMCP6).